The sequence spans 199 residues: GTP-binding protein Di-Ras2 (199 aa).

Residues Gly-14 to Ser-21, Arg-33 to Thr-39, Asp-61 to Ser-65, and Asn-121 to Asp-124 each bind GTP. Ser-35 bears the Phosphoserine mark. An Effector region motif is present at residues Tyr-36 to Tyr-44. Phosphoserine is present on Ser-126. GTP is bound at residue Ala-152 to Lys-153. The residue at position 196 (Cys-196) is a Cysteine methyl ester. Cys-196 is lipidated: S-geranylgeranyl cysteine. The propeptide at Val-197–Met-199 is removed in mature form.

It belongs to the small GTPase superfamily. Di-Ras family. Post-translationally, ubiquitinated by the ECS(ASB11) complex via 'Lys-11'-linked ubiquitin chains, leading to its degradation by the proteasome.

The protein resides in the cell membrane. It catalyses the reaction GTP + H2O = GDP + phosphate + H(+). In terms of biological role, displays low GTPase activity and exists predominantly in the GTP-bound form. The protein is GTP-binding protein Di-Ras2 (DIRAS2) of Macaca fascicularis (Crab-eating macaque).